The sequence spans 220 residues: Large ribosomal subunit protein uL16 (220 aa).

This sequence belongs to the universal ribosomal protein uL16 family. As to quaternary structure, component of the small ribosomal subunit. Mature ribosomes consist of a small (40S) and a large (60S) subunit. The 40S subunit contains about 33 different proteins and 1 molecule of RNA (18S). The 60S subunit contains about 49 different proteins and 3 molecules of RNA (25S, 5.8S and 5S).

The polypeptide is Large ribosomal subunit protein uL16 (RPL10) (Euphorbia esula (Leafy spurge)).